The following is a 338-amino-acid chain: Formamidase (338 aa).

One can recognise a CN hydrolase domain in the interval 14–260 (LLIAAIQYPV…WEIVTAELFP (247 aa)). E60 serves as the catalytic Proton acceptor. The Proton donor role is filled by K133. C166 functions as the Nucleophile in the catalytic mechanism.

It belongs to the carbon-nitrogen hydrolase superfamily. Aliphatic amidase family.

The catalysed reaction is formamide + H2O = formate + NH4(+). Its function is as follows. Is an aliphatic amidase with a restricted substrate specificity, as it only hydrolyzes formamide. This Photorhabdus laumondii subsp. laumondii (strain DSM 15139 / CIP 105565 / TT01) (Photorhabdus luminescens subsp. laumondii) protein is Formamidase.